The chain runs to 299 residues: MHVLAARLGEILHSPVQLGEPLSRHTSWRIGGPAEIFLSPCDTKELVASLELLAQVGMPWIALGAGTNVLVRDGGFRGAVIHTGGLQDMAFDADGRARVGGGVPVMRLIRHCVERGLAGLEDLAGLPATIGGAVVMNAGAGKQDLAGVLDGAFLAGPSGVEYWPADRLELGYRTSAVPPGRIVTAASLRFRKASPEVLETYVRQRVQQRRKAQGVGKPNAGSVFKNPPGQQAWRLIDSCELRGFAVGGAQVSEKHANFIVNRGGARAEDVLRLIAEIQKKVEKRTGIVLEPEVKVVGQA.

The 165-residue stretch at 29 to 193 folds into the FAD-binding PCMH-type domain; it reads RIGGPAEIFL…TAASLRFRKA (165 aa). The active site involves Arg173. The active-site Proton donor is Ser222. Glu292 is a catalytic residue.

It belongs to the MurB family. Requires FAD as cofactor.

It localises to the cytoplasm. It catalyses the reaction UDP-N-acetyl-alpha-D-muramate + NADP(+) = UDP-N-acetyl-3-O-(1-carboxyvinyl)-alpha-D-glucosamine + NADPH + H(+). It functions in the pathway cell wall biogenesis; peptidoglycan biosynthesis. Cell wall formation. This chain is UDP-N-acetylenolpyruvoylglucosamine reductase, found in Syntrophotalea carbinolica (strain DSM 2380 / NBRC 103641 / GraBd1) (Pelobacter carbinolicus).